Reading from the N-terminus, the 105-residue chain is MEKCINRYKDILPLNRYSDGSGKCWGLLGCEISSVVGQTGVKRLLLGSITKFVYCSMRLFSLYTIVQYFKSLRCLRNGRTEVRLYTHYKRHLPRSVNSIYLQTNC.

This is an uncharacterized protein from Schizosaccharomyces pombe (strain 972 / ATCC 24843) (Fission yeast).